We begin with the raw amino-acid sequence, 80 residues long: RNA-binding protein Hfq (80 aa).

Positions 10–69 (DPFLNLLRKEHVPVSIYLVNGIKLQGHIESFDQYVVLLRNTVTQMVYKHAISTVVPGRPV) constitute a Sm domain.

This sequence belongs to the Hfq family. As to quaternary structure, homohexamer.

Functionally, RNA chaperone that binds small regulatory RNA (sRNAs) and mRNAs to facilitate mRNA translational regulation in response to envelope stress, environmental stress and changes in metabolite concentrations. Also binds with high specificity to tRNAs. This is RNA-binding protein Hfq from Leptothrix cholodnii (strain ATCC 51168 / LMG 8142 / SP-6) (Leptothrix discophora (strain SP-6)).